Here is a 119-residue protein sequence, read N- to C-terminus: Large ribosomal subunit protein uL24 (119 aa).

This sequence belongs to the universal ribosomal protein uL24 family. In terms of assembly, part of the 50S ribosomal subunit.

In terms of biological role, one of two assembly initiator proteins, it binds directly to the 5'-end of the 23S rRNA, where it nucleates assembly of the 50S subunit. Located at the polypeptide exit tunnel on the outside of the subunit. The polypeptide is Large ribosomal subunit protein uL24 (Methanococcus maripaludis (strain C5 / ATCC BAA-1333)).